Reading from the N-terminus, the 202-residue chain is LexA repressor 1 (202 aa).

Residues 28 to 48 (RAEIAQELGFKSPNAAEEHLK) constitute a DNA-binding region (H-T-H motif). Active-site for autocatalytic cleavage activity residues include S123 and K160.

Belongs to the peptidase S24 family. In terms of assembly, homodimer.

It carries out the reaction Hydrolysis of Ala-|-Gly bond in repressor LexA.. Its function is as follows. Represses a number of genes involved in the response to DNA damage (SOS response), including recA and lexA. In the presence of single-stranded DNA, RecA interacts with LexA causing an autocatalytic cleavage which disrupts the DNA-binding part of LexA, leading to derepression of the SOS regulon and eventually DNA repair. The protein is LexA repressor 1 of Pseudomonas syringae pv. tomato (strain ATCC BAA-871 / DC3000).